Here is a 562-residue protein sequence, read N- to C-terminus: Terpene synthase 2 (562 aa).

Mg(2+) is bound by residues Asp315, Asp319, Asp459, and Glu467. The DDXXD motif signature appears at 315-319; the sequence is DDEYD.

The protein belongs to the terpene synthase family. Tpsa subfamily. The cofactor is Mg(2+). Requires Mn(2+) as cofactor. As to expression, expressed at low levels in stems, leaves, roots and fruits.

The enzyme catalyses (2E,6E)-farnesyl diphosphate = delta-cadinene + diphosphate. It carries out the reaction (2E,6E)-farnesyl diphosphate = alpha-cadinene + diphosphate. It catalyses the reaction (2E,6E)-farnesyl diphosphate + H2O = (-)-delta-cadinol + diphosphate. Its pathway is secondary metabolite biosynthesis; terpenoid biosynthesis. Functionally, sesquiterpene synthase involved in the biosynthesis of volatile compounds that contribute to the characteristic flavors of black pepper. Mediates the conversion of (2E,6E)-farnesyl diphosphate (FPP) into alpha-cadinene, delta-cadinene and delta-cadinol. The chain is Terpene synthase 2 from Piper nigrum (Black pepper).